The sequence spans 1241 residues: ATP-dependent helicase/nuclease subunit A (1241 aa).

The UvrD-like helicase ATP-binding domain occupies 12 to 485 (SQWTDDQWKA…IDLAKNFRSR (474 aa)). 33–40 (AAAGSGKT) contacts ATP. Positions 505–805 (GEIDYDADAE…RIMTIHKSKG (301 aa)) constitute a UvrD-like helicase C-terminal domain.

It belongs to the helicase family. AddA subfamily. Heterodimer of AddA and AddB/RexB. It depends on Mg(2+) as a cofactor.

The enzyme catalyses Couples ATP hydrolysis with the unwinding of duplex DNA by translocating in the 3'-5' direction.. It carries out the reaction ATP + H2O = ADP + phosphate + H(+). Functionally, the heterodimer acts as both an ATP-dependent DNA helicase and an ATP-dependent, dual-direction single-stranded exonuclease. Recognizes the chi site generating a DNA molecule suitable for the initiation of homologous recombination. The AddA nuclease domain is required for chi fragment generation; this subunit has the helicase and 3' -&gt; 5' nuclease activities. The sequence is that of ATP-dependent helicase/nuclease subunit A from Bacillus cereus (strain AH187).